Here is a 657-residue protein sequence, read N- to C-terminus: Acetyl-coenzyme A synthetase (657 aa).

Residues 192 to 195 and T311 each bind CoA; that span reads RRGK. Residues 387 to 389, 411 to 416, D504, R519, and R530 contribute to the ATP site; these read GEP and DTWWQT. Residues H543 and V546 each coordinate Mg(2+). CoA is bound at residue R592. K617 carries the post-translational modification N6-acetyllysine.

It belongs to the ATP-dependent AMP-binding enzyme family. Mg(2+) is required as a cofactor. Post-translationally, acetylated. Deacetylation by the SIR2-homolog deacetylase activates the enzyme.

The catalysed reaction is acetate + ATP + CoA = acetyl-CoA + AMP + diphosphate. In terms of biological role, catalyzes the conversion of acetate into acetyl-CoA (AcCoA), an essential intermediate at the junction of anabolic and catabolic pathways. AcsA undergoes a two-step reaction. In the first half reaction, AcsA combines acetate with ATP to form acetyl-adenylate (AcAMP) intermediate. In the second half reaction, it can then transfer the acetyl group from AcAMP to the sulfhydryl group of CoA, forming the product AcCoA. The protein is Acetyl-coenzyme A synthetase of Campylobacter jejuni subsp. jejuni serotype O:2 (strain ATCC 700819 / NCTC 11168).